The following is a 167-amino-acid chain: Crossover junction endodeoxyribonuclease RuvC (167 aa).

Active-site residues include D7, E67, and D139. Mg(2+)-binding residues include D7, E67, and D139.

It belongs to the RuvC family. In terms of assembly, homodimer which binds Holliday junction (HJ) DNA. The HJ becomes 2-fold symmetrical on binding to RuvC with unstacked arms; it has a different conformation from HJ DNA in complex with RuvA. In the full resolvosome a probable DNA-RuvA(4)-RuvB(12)-RuvC(2) complex forms which resolves the HJ. Mg(2+) serves as cofactor.

Its subcellular location is the cytoplasm. The catalysed reaction is Endonucleolytic cleavage at a junction such as a reciprocal single-stranded crossover between two homologous DNA duplexes (Holliday junction).. Functionally, the RuvA-RuvB-RuvC complex processes Holliday junction (HJ) DNA during genetic recombination and DNA repair. Endonuclease that resolves HJ intermediates. Cleaves cruciform DNA by making single-stranded nicks across the HJ at symmetrical positions within the homologous arms, yielding a 5'-phosphate and a 3'-hydroxyl group; requires a central core of homology in the junction. The consensus cleavage sequence is 5'-(A/T)TT(C/G)-3'. Cleavage occurs on the 3'-side of the TT dinucleotide at the point of strand exchange. HJ branch migration catalyzed by RuvA-RuvB allows RuvC to scan DNA until it finds its consensus sequence, where it cleaves and resolves the cruciform DNA. This Zymomonas mobilis subsp. mobilis (strain ATCC 31821 / ZM4 / CP4) protein is Crossover junction endodeoxyribonuclease RuvC.